A 396-amino-acid chain; its full sequence is MKFTPPPASLRNPLIIPEKIMMGPGPSNCSKRVLTAMTNTVLSNFHAELFRTMDEVKDGLRYIFQTENRATMCVSGSAHAGMEAMLSNLLEEGDRVLIAVNGIWAERAVEMSERYGADVRTIEGPPDRPFSLETLARAIELHQPKCLFLTHGDSSSGLLQPLEGVGQICHQHDCLLIVDAVASLCGVPFYMDKWEIDAVYTGAQKVLGAPPGITPISISPKALDVIRNRRTKSKVFYWDLLLLGNYWGCYDEPKRYHHTVASNLIFALREALAQIAEEGLENQIKRRIECAQILYEGLGKMGLDIFVKDPRHRLPTVTGIMIPKGVDWWKVSQYAMNNFSLEVQGGLGPTFGKAWRVGIMGECSTVQKIQFYLYGFKESLKATHPDYIFEESNGFH.

The binds to and confers specificity for 3-hydroxykynurenine; shared with dimeric partner stretch occupies residues S43–N44. Pyridoxal 5'-phosphate-binding positions include S77–H79, S154, and Q204. Substrate is bound at residue S154. K205 is subject to N6-(pyridoxal phosphate)lysine. Positions 256 and 259 each coordinate pyridoxal 5'-phosphate. Residue R356 participates in substrate binding.

It belongs to the class-V pyridoxal-phosphate-dependent aminotransferase family. Homodimer. Pyridoxal 5'-phosphate serves as cofactor. Expressed in gut and ovaries.

The protein resides in the peroxisome. The enzyme catalyses L-kynurenine + glyoxylate = kynurenate + glycine + H2O. The catalysed reaction is 3-hydroxy-L-kynurenine + glyoxylate = xanthurenate + glycine + H2O. It carries out the reaction 3-hydroxy-L-kynurenine + pyruvate = xanthurenate + L-alanine + H2O. It catalyses the reaction glyoxylate + L-alanine = glycine + pyruvate. Its pathway is amino-acid degradation; L-kynurenine degradation; kynurenate from L-kynurenine: step 1/2. Its function is as follows. Catalyzes the pyridoxal 5'-phosphate-dependent transamination of both 3-hydroxykynurenine and L-kynurenine to xanthurenic acid and kynurenic acid, respectively, preferentially using the alpha-ketoacid glyoxylate as the amino group acceptor. Although glyoxylate is the preferred amino group acceptor, transamination of 3-hydroxykynurenine also works with pyruvate as the amino acceptor in vitro. Involved in the detoxification of cytotoxic metabolite 3-hydroxykynurenine generated by the hydroxylation of L-kynurenine, an intermediate in the tryptophan catabolism pathway. The Plasmodium parasite uses xanthurenic acid produced in the midgut to activate its gametocytes ingested during a blood meal. Also catalyzes, although with a lesser efficiency, the transamination of alanine with glyoxylate as an amino group acceptor. May play a role in the detoxification of glyoxylate, a toxic plant metabolite from the diet. This Anopheles gambiae (African malaria mosquito) protein is 3-hydroxykynurenine transaminase.